We begin with the raw amino-acid sequence, 123 residues long: Small ribosomal subunit protein uS12 (123 aa).

Asp89 is modified (3-methylthioaspartic acid).

It belongs to the universal ribosomal protein uS12 family. Part of the 30S ribosomal subunit. Contacts proteins S8 and S17. May interact with IF1 in the 30S initiation complex.

Functionally, with S4 and S5 plays an important role in translational accuracy. Its function is as follows. Interacts with and stabilizes bases of the 16S rRNA that are involved in tRNA selection in the A site and with the mRNA backbone. Located at the interface of the 30S and 50S subunits, it traverses the body of the 30S subunit contacting proteins on the other side and probably holding the rRNA structure together. The combined cluster of proteins S8, S12 and S17 appears to hold together the shoulder and platform of the 30S subunit. The sequence is that of Small ribosomal subunit protein uS12 from Caulobacter vibrioides (strain ATCC 19089 / CIP 103742 / CB 15) (Caulobacter crescentus).